The primary structure comprises 1207 residues: Brassinosteroid LRR receptor kinase (1207 aa).

Residues 1–34 form the signal peptide; sequence MKAHKTVFNQHPLSLNKLFFVLLLIFFLPPASPA. The Cys pair 1 signature appears at 71 to 78; that stretch reads CSFTGVSC. LRR repeat units follow at residues 109–131, 135–157, 161–181, 186–207, 213–234, 235–257, 258–280, 282–304, 305–325, 329–350, 353–374, 378–400, 402–423, 428–450, 452–474, 476–499, 500–523, 524–547, 548–570, and 572–594; these read NLESLVLKNANLSGSLTSAAKSQ, TLDSIDLAENTISGPISDISSFG, NLKSLNLSKNFLDPPGKEMLK, SLQVLDLSYNNISGFNLFPWVS, ELEFFSLKGNKLAGSIPELDFK, NLSYLDLSANNFSTVFPSFKDCS, NLQHLDLSSNKFYGDIGSSLSSC, KLSFLNLTNNQFVGLVPKLPSES, LQYLYLRGNDFQGVYPNQLAD, TVVELDLSYNNFSGMVPESLGE, SLELVDISYNNFSGKLPVDTLS, NIKTMVLSFNKFVGGLPDSFSNL, KLETLDMSSNNLTGVIPSGICK, NLKVLYLQNNLFKGPIPDSLSNC, QLVSLDLSFNYLTGSIPSSLGSL, KLKDLILWLNQLSGEIPQELMYLQ, ALENLILDFNDLTGPIPASLSNCT, KLNWISLSNNQLSGEIPASLGRLS, NLAILKLGNNSISGNIPAELGNC, and SLIWLDLNTNFLNGSIPPPLFKQ. N119 carries an N-linked (GlcNAc...) asparagine glycan. N-linked (GlcNAc...) asparagine glycosylation is found at N166 and N196. N-linked (GlcNAc...) asparagine glycosylation is found at N235 and N245. An N-linked (GlcNAc...) asparagine glycan is attached at N287. 2 N-linked (GlcNAc...) asparagine glycosylation sites follow: N339 and N363. Residues N412 and N449 are each glycosylated (N-linked (GlcNAc...) asparagine). N-linked (GlcNAc...) asparagine glycosylation occurs at N521. 4 N-linked (GlcNAc...) asparagine glycosylation sites follow: N556, N584, N646, and N662. LRR repeat units follow at residues 664–686, 688–711, 712–735, and 736–758; these read SMIFLDLSYNKLEGSIPKELGAM, YLSILNLGHNDLSGMIPQQLGGLK, NVAILDLSYNRFNGTIPNSLTSLT, and LLGEIDLSNNNLSGMIPESAPFD. 3 N-linked (GlcNAc...) asparagine glycosylation sites follow: N724, N746, and N767. The short motif at 771–779 is the Cys pair 2 element; it reads CGYPLPIPC. A helical membrane pass occupies residues 803-823; that stretch reads SVAMGLLFSLFCIFGLIIVAI. The Protein kinase domain occupies 888 to 1163; sequence FHNDSLVGSG…IQVMAMFKEI (276 aa). ATP contacts are provided by residues 894–902 and K916; that span reads VGSGGFGDV. The Proton acceptor role is filled by D1014.

The protein belongs to the protein kinase superfamily. Ser/Thr protein kinase family.

Its subcellular location is the cell membrane. It catalyses the reaction L-seryl-[protein] + ATP = O-phospho-L-seryl-[protein] + ADP + H(+). The enzyme catalyses L-threonyl-[protein] + ATP = O-phospho-L-threonyl-[protein] + ADP + H(+). In terms of biological role, receptor with a serine/threonine-protein kinase activity. Regulates, in response to brassinosteroid binding, a signaling cascade involved in plant development, including expression of light- and stress-regulated genes, promotion of cell elongation, normal leaf and chloroplast senescence, and flowering. May be involved in a feedback regulation of brassinosteroid biosynthesis. May be also involved in the perception of systemin, a peptide hormone responsible for the systemic activation of defense genes in leaves of wounded plants. This is Brassinosteroid LRR receptor kinase (CURL3) from Solanum lycopersicum (Tomato).